A 243-amino-acid chain; its full sequence is UPF0246 protein SAG2081 (243 aa).

The protein belongs to the UPF0246 family.

This Streptococcus agalactiae serotype V (strain ATCC BAA-611 / 2603 V/R) protein is UPF0246 protein SAG2081.